A 122-amino-acid chain; its full sequence is Fluoride-specific ion channel FluC (122 aa).

A run of 4 helical transmembrane segments spans residues 4 to 24 (LLIALGGGTGSLARYLLGTAI), 34 to 54 (IGTMVVNVSGCFAIGLAMTLL), 66 to 86 (LALVVGFLGGYTTFSSFEWET), and 95 to 115 (FWIGLANVLGSVTLGYAAVWF). Na(+) is bound by residues glycine 74 and threonine 77.

This sequence belongs to the fluoride channel Fluc/FEX (TC 1.A.43) family.

The protein localises to the cell inner membrane. The enzyme catalyses fluoride(in) = fluoride(out). Its activity is regulated as follows. Na(+) is not transported, but it plays an essential structural role and its presence is essential for fluoride channel function. Fluoride-specific ion channel. Important for reducing fluoride concentration in the cell, thus reducing its toxicity. The chain is Fluoride-specific ion channel FluC from Solibacter usitatus (strain Ellin6076).